The chain runs to 527 residues: Cytochrome P450 93B16 (527 aa).

A helical transmembrane segment spans residues 5–25 (SLLLVFLIVFISASLLKLLFV). Heme is bound at residue Cys455.

Belongs to the cytochrome P450 family. Heme serves as cofactor.

The protein resides in the membrane. It catalyses the reaction a flavanone + reduced [NADPH--hemoprotein reductase] + O2 = a flavone + oxidized [NADPH--hemoprotein reductase] + 2 H2O + H(+). It participates in secondary metabolite biosynthesis; flavonoid biosynthesis. Its function is as follows. Functions as a flavone synthase II (FNSII) that catalyzes the direct conversion of flavanones to flavones. In vitro, can convert liquiritigenin, naringenin and eriodictyol to 7,4'-dihydroxyflavone, apigenin and luteolin, respectively. The chain is Cytochrome P450 93B16 from Glycine max (Soybean).